The primary structure comprises 186 residues: Large ribosomal subunit protein uL10 (186 aa).

This sequence belongs to the universal ribosomal protein uL10 family. Part of the ribosomal stalk of the 50S ribosomal subunit. The N-terminus interacts with L11 and the large rRNA to form the base of the stalk. The C-terminus forms an elongated spine to which L12 dimers bind in a sequential fashion forming a multimeric L10(L12)X complex.

In terms of biological role, forms part of the ribosomal stalk, playing a central role in the interaction of the ribosome with GTP-bound translation factors. This Nitrosococcus oceani (strain ATCC 19707 / BCRC 17464 / JCM 30415 / NCIMB 11848 / C-107) protein is Large ribosomal subunit protein uL10.